Reading from the N-terminus, the 396-residue chain is THAP domain-containing protein 5 (396 aa).

Residues 2–85 form a THAP-type zinc finger; sequence MPRYCAAICC…LKQTAVPTIF (84 aa). The interval 86–113 is disordered; sequence SLPEDNQGKDPSKKKSQKKNLEDEKEVC. A compositionally biased stretch (basic and acidic residues) spans 91–113; it reads NQGKDPSKKKSQKKNLEDEKEVC. Residues 322-325 carry the HCFC1-binding motif (HBM) motif; sequence EHSY. Residues 349-382 adopt a coiled-coil conformation; the sequence is LELKEQQTLGRLKSLEALVRQLKQENWLSEENVK.

In terms of assembly, interacts with HTRA2; under apoptotic conditions. Interacts with ABRAXAS2. In terms of processing, cleaved by HTRA2 during apoptosis.

The protein localises to the nucleus. Its function is as follows. Has sequence-specific DNA-binding activity and can function as transcriptional repressor (in vitro). May be a regulator of cell cycle: THAP5 overexpression in human cell lines causes cell cycle arrest at G2/M phase. The sequence is that of THAP domain-containing protein 5 (THAP5) from Macaca fascicularis (Crab-eating macaque).